The sequence spans 582 residues: Calcium-dependent protein kinase 24 (582 aa).

A disordered region spans residues 1–36 (MGSCVSSPLKGSPFGKRPVRRRHSSNSRTSSVPRFD). Glycine 2 is lipidated: N-myristoyl glycine. In terms of domain architecture, Protein kinase spans 66–324 (YDLGKELGRG…VQEVLEHPWI (259 aa)). Residues 72 to 80 (LGRGEFGVT) and lysine 95 each bind ATP. The Proton acceptor role is filled by aspartate 190. The residue at position 230 (serine 230) is a Phosphoserine. Positions 330–360 (APNVNLGDNVRTKIQQFLLMNRFKKKVLRIV) are autoinhibitory domain. EF-hand domains lie at 367 to 402 (EEIA…IGQV), 403 to 438 (VPDG…LKRM), 439 to 474 (GCDE…DKLG), and 478 to 513 (GNDQ…GTDW). Residues aspartate 380, aspartate 382, asparagine 384, histidine 386, glutamate 391, aspartate 416, aspartate 418, asparagine 420, methionine 422, glutamate 427, aspartate 452, asparagine 454, asparagine 456, glutamate 463, aspartate 491, asparagine 493, aspartate 495, and arginine 497 each contribute to the Ca(2+) site. Serine 499 is subject to Phosphoserine. Glutamate 502 provides a ligand contact to Ca(2+).

It belongs to the protein kinase superfamily. Ser/Thr protein kinase family. CDPK subfamily.

It localises to the membrane. It catalyses the reaction L-seryl-[protein] + ATP = O-phospho-L-seryl-[protein] + ADP + H(+). The catalysed reaction is L-threonyl-[protein] + ATP = O-phospho-L-threonyl-[protein] + ADP + H(+). Activated by calcium. Autophosphorylation may play an important role in the regulation of the kinase activity. Functionally, may play a role in signal transduction pathways that involve calcium as a second messenger. The chain is Calcium-dependent protein kinase 24 (CPK24) from Arabidopsis thaliana (Mouse-ear cress).